The primary structure comprises 537 residues: Interleukin-2 receptor subunit beta (537 aa).

The signal sequence occupies residues 1 to 26 (MATVDLSWRLPLYILLLLLATTWVSA). Residues 27–239 (AVNDCSHLKC…FRTRPADPKE (213 aa)) lie on the Extracellular side of the membrane. The cysteines at positions 36 and 46 are disulfide-linked. 3 N-linked (GlcNAc...) asparagine glycosylation sites follow: Asn-43, Asn-55, and Asn-71. Cys-74 and Cys-86 form a disulfide bridge. The region spanning 135-235 (APHSLQVLHI…QPMAFRTRPA (101 aa)) is the Fibronectin type-III domain. Asn-150 carries N-linked (GlcNAc...) asparagine glycosylation. The short motif at 221 to 225 (WSPWS) is the WSXWS motif element. The chain crosses the membrane as a helical span at residues 240–267 (IFPLPWLRCLLLVLGCFFGFLSCVCVLV). Residues 268-537 (KCRYLGPWLK…LQAQDSAHLI (270 aa)) are Cytoplasmic-facing. The short motif at 280 to 288 (LKCHIPDPS) is the Box 1 motif element. 2 disordered regions span residues 442–466 (AYGNSITPEERPPLSLQEGLPSLAS) and 479–498 (ELGDDGEGMSTNSSGQQASV). Positions 487–497 (MSTNSSGQQAS) are enriched in polar residues.

Belongs to the type I cytokine receptor family. Type 4 subfamily. As to quaternary structure, non-covalent dimer of an alpha and a beta subunit. IL2R exists in 3 different forms: a high affinity dimer, an intermediate affinity monomer (beta subunit), and a low affinity monomer (alpha subunit). The high and intermediate affinity forms also associate with a gamma subunit. Interacts with SHB upon interleukin stimulation.

The protein localises to the cell membrane. It localises to the cell surface. Receptor for interleukin-2. This beta subunit is involved in receptor mediated endocytosis and transduces the mitogenic signals of IL2. Probably in association with IL15RA, involved in the stimulation of neutrophil phagocytosis by IL15. The sequence is that of Interleukin-2 receptor subunit beta (Il2rb) from Rattus norvegicus (Rat).